Reading from the N-terminus, the 322-residue chain is Formimidoylglutamase (322 aa).

Mn(2+) is bound by residues histidine 127, aspartate 163, histidine 165, aspartate 167, aspartate 254, and aspartate 256.

This sequence belongs to the arginase family. Mn(2+) serves as cofactor.

The catalysed reaction is N-formimidoyl-L-glutamate + H2O = formamide + L-glutamate. The protein operates within amino-acid degradation; L-histidine degradation into L-glutamate; L-glutamate from N-formimidoyl-L-glutamate (hydrolase route): step 1/1. Its function is as follows. Catalyzes the conversion of N-formimidoyl-L-glutamate to L-glutamate and formamide. The chain is Formimidoylglutamase from Paraburkholderia xenovorans (strain LB400).